Reading from the N-terminus, the 214-residue chain is ATP phosphoribosyltransferase (214 aa).

It belongs to the ATP phosphoribosyltransferase family. Short subfamily. Heteromultimer composed of HisG and HisZ subunits.

The protein resides in the cytoplasm. It catalyses the reaction 1-(5-phospho-beta-D-ribosyl)-ATP + diphosphate = 5-phospho-alpha-D-ribose 1-diphosphate + ATP. Its pathway is amino-acid biosynthesis; L-histidine biosynthesis; L-histidine from 5-phospho-alpha-D-ribose 1-diphosphate: step 1/9. Catalyzes the condensation of ATP and 5-phosphoribose 1-diphosphate to form N'-(5'-phosphoribosyl)-ATP (PR-ATP). Has a crucial role in the pathway because the rate of histidine biosynthesis seems to be controlled primarily by regulation of HisG enzymatic activity. This chain is ATP phosphoribosyltransferase, found in Methylibium petroleiphilum (strain ATCC BAA-1232 / LMG 22953 / PM1).